A 322-amino-acid chain; its full sequence is Lipoyl synthase (322 aa).

The segment covering 1 to 12 (MVTVLNTVNQSG) has biased composition (polar residues). The segment at 1–22 (MVTVLNTVNQSGRLRHPEKAHR) is disordered. Residues Cys60, Cys65, Cys71, Cys86, Cys90, Cys93, and Ser299 each coordinate [4Fe-4S] cluster. Residues 72–288 (WEKKHATFMI…ETIGKTKGFL (217 aa)) form the Radical SAM core domain.

The protein belongs to the radical SAM superfamily. Lipoyl synthase family. Requires [4Fe-4S] cluster as cofactor.

It is found in the cytoplasm. The catalysed reaction is [[Fe-S] cluster scaffold protein carrying a second [4Fe-4S](2+) cluster] + N(6)-octanoyl-L-lysyl-[protein] + 2 oxidized [2Fe-2S]-[ferredoxin] + 2 S-adenosyl-L-methionine + 4 H(+) = [[Fe-S] cluster scaffold protein] + N(6)-[(R)-dihydrolipoyl]-L-lysyl-[protein] + 4 Fe(3+) + 2 hydrogen sulfide + 2 5'-deoxyadenosine + 2 L-methionine + 2 reduced [2Fe-2S]-[ferredoxin]. The protein operates within protein modification; protein lipoylation via endogenous pathway; protein N(6)-(lipoyl)lysine from octanoyl-[acyl-carrier-protein]: step 2/2. In terms of biological role, catalyzes the radical-mediated insertion of two sulfur atoms into the C-6 and C-8 positions of the octanoyl moiety bound to the lipoyl domains of lipoate-dependent enzymes, thereby converting the octanoylated domains into lipoylated derivatives. The sequence is that of Lipoyl synthase from Brucella abortus (strain S19).